We begin with the raw amino-acid sequence, 365 residues long: Outer membrane porin protein LC (365 aa).

Residues 1–23 (MKKLTVAISAVAASVLMAMSAQA) form the signal peptide.

The protein belongs to the Gram-negative porin family. In terms of assembly, homotrimer.

The protein resides in the host cell outer membrane. Functionally, forms pores that allow passive diffusion of small molecules across the host cell outer membrane. The polypeptide is Outer membrane porin protein LC (LC) (Enterobacteria phage PA-2 (Bacteriophage PA-2)).